Consider the following 198-residue polypeptide: Holliday junction branch migration complex subunit RuvA (198 aa).

The interval 1 to 61 is domain I; sequence MILYRIGEII…EYQYATYAFK (61 aa). Residues 62-139 are domain II; the sequence is DFKERLLFVD…KMISPKDAAK (78 aa). The segment at 140–144 is flexible linker; it reads INETT. A domain III region spans residues 144-198; that stretch reads TNTLSEVKETLKMVGFKTKQIDGALSKISSTDDVEKMIEEAIKLMSTQNYESATA.

The protein belongs to the RuvA family. Homotetramer. Forms an RuvA(8)-RuvB(12)-Holliday junction (HJ) complex. HJ DNA is sandwiched between 2 RuvA tetramers; dsDNA enters through RuvA and exits via RuvB. An RuvB hexamer assembles on each DNA strand where it exits the tetramer. Each RuvB hexamer is contacted by two RuvA subunits (via domain III) on 2 adjacent RuvB subunits; this complex drives branch migration. In the full resolvosome a probable DNA-RuvA(4)-RuvB(12)-RuvC(2) complex forms which resolves the HJ.

It is found in the cytoplasm. Functionally, the RuvA-RuvB-RuvC complex processes Holliday junction (HJ) DNA during genetic recombination and DNA repair, while the RuvA-RuvB complex plays an important role in the rescue of blocked DNA replication forks via replication fork reversal (RFR). RuvA specifically binds to HJ cruciform DNA, conferring on it an open structure. The RuvB hexamer acts as an ATP-dependent pump, pulling dsDNA into and through the RuvAB complex. HJ branch migration allows RuvC to scan DNA until it finds its consensus sequence, where it cleaves and resolves the cruciform DNA. The chain is Holliday junction branch migration complex subunit RuvA from Mycoplasmopsis agalactiae (strain NCTC 10123 / CIP 59.7 / PG2) (Mycoplasma agalactiae).